We begin with the raw amino-acid sequence, 348 residues long: Phosphate acyltransferase (348 aa).

It belongs to the PlsX family. As to quaternary structure, homodimer. Probably interacts with PlsY.

It localises to the cytoplasm. The enzyme catalyses a fatty acyl-[ACP] + phosphate = an acyl phosphate + holo-[ACP]. It participates in lipid metabolism; phospholipid metabolism. Catalyzes the reversible formation of acyl-phosphate (acyl-PO(4)) from acyl-[acyl-carrier-protein] (acyl-ACP). This enzyme utilizes acyl-ACP as fatty acyl donor, but not acyl-CoA. The protein is Phosphate acyltransferase of Francisella tularensis subsp. novicida (strain U112).